The chain runs to 150 residues: Large ribosomal subunit protein bL9 (150 aa).

Belongs to the bacterial ribosomal protein bL9 family.

Its function is as follows. Binds to the 23S rRNA. In Paraburkholderia xenovorans (strain LB400), this protein is Large ribosomal subunit protein bL9.